Here is a 180-residue protein sequence, read N- to C-terminus: Ribulose bisphosphate carboxylase small subunit, chloroplastic (180 aa).

Residues 1-56 constitute a chloroplast transit peptide; sequence MALISSAAVTTVNRASSAQANLVAPFTGLKSSAGFPVTKKTNNDITSIASNGGRVN.

Belongs to the RuBisCO small chain family. As to quaternary structure, heterohexadecamer of 8 large and 8 small subunits.

Its subcellular location is the plastid. It is found in the chloroplast. RuBisCO catalyzes two reactions: the carboxylation of D-ribulose 1,5-bisphosphate, the primary event in carbon dioxide fixation, as well as the oxidative fragmentation of the pentose substrate. Both reactions occur simultaneously and in competition at the same active site. Although the small subunit is not catalytic it is essential for maximal activity. This chain is Ribulose bisphosphate carboxylase small subunit, chloroplastic, found in Medicago sativa (Alfalfa).